Consider the following 288-residue polypeptide: MNEDTTTLVEETNTTTQAALRQLSQTTPLVNAITNDVTVNQVANIILHWGGLPVMSDDVRELDEMVNAAEACLLNMGTVSETGEEAMMTAGQAASEHDAGLVLDPVGAGATATRSRVAERLSTTLDVDVINGNRGEVAALVGEDAEVRGVESVGEHPDAAETAIACAQHTEAVVVSSGVTDIVATAETAFELNVGDEMLGTLVGTGCMLGGTIAAFCGGLDDPLTAALTGTVAFGLAGEAAANGEFGEYAGPASYETTVLDAAAGTDPEMIAAVDIDNRVNRVLAEAK.

M55 is a substrate binding site. 2 residues coordinate ATP: N131 and S177. G204 provides a ligand contact to substrate.

It belongs to the Thz kinase family. The cofactor is Mg(2+).

It carries out the reaction 5-(2-hydroxyethyl)-4-methylthiazole + ATP = 4-methyl-5-(2-phosphooxyethyl)-thiazole + ADP + H(+). Its pathway is cofactor biosynthesis; thiamine diphosphate biosynthesis; 4-methyl-5-(2-phosphoethyl)-thiazole from 5-(2-hydroxyethyl)-4-methylthiazole: step 1/1. In terms of biological role, catalyzes the phosphorylation of the hydroxyl group of 4-methyl-5-beta-hydroxyethylthiazole (THZ). The chain is Hydroxyethylthiazole kinase from Haloquadratum walsbyi (strain DSM 16790 / HBSQ001).